Reading from the N-terminus, the 564-residue chain is E3 ubiquitin-protein ligase hrd-like protein 1 (564 aa).

A helical membrane pass occupies residues 17–37 (SYLALSVLVAIVASVTVFTTF). Residue Asn53 is glycosylated (N-linked (GlcNAc...) asparagine). 7 helical membrane passes run 61–81 (YGLN…HYIL), 86–106 (LIWV…RLII), 123–143 (QAFF…IGPQ), 148–168 (VMPW…QFIT), 185–205 (KISF…FLIS), 215–235 (PAVL…YILF), and 272–292 (LSFA…IFFL). The RING-type; atypical zinc finger occupies 335–373 (CVVCWELLGTSRRLPCSHQFHDWCLMWWLAQDSSCPTCR). The region spanning 432–474 (QLQTMLEQVREMFPQMSVDIIMTDLRQSGSAQSTIENILEGRI) is the CUE domain.

The protein resides in the membrane. In terms of biological role, proposed to have a role in neuroprotection. In Caenorhabditis elegans, this protein is E3 ubiquitin-protein ligase hrd-like protein 1 (hrdl-1).